We begin with the raw amino-acid sequence, 242 residues long: Cytochrome c oxidase subunit 2 (242 aa).

Over 1–30 (MSFYGSRYFGDIVHGELGKDLFRYHGFVMM) the chain is Mitochondrial intermembrane. The helical transmembrane segment at 31–47 (VAVAVLVFVMYMGCVIL) threads the bilayer. Residues 48 to 66 (FTKFSYRHFLNRQRLEFWW) lie on the Mitochondrial matrix side of the membrane. Residues 67-83 (TIVPMLMLVGLWXPSMI) traverse the membrane as a helical segment. Over 84–242 (NLYYMEEVKR…YFVMWLEALN (159 aa)) the chain is Mitochondrial intermembrane. The Cu cation site is built by histidine 176, cysteine 211, glutamate 213, cysteine 215, histidine 219, and methionine 222. Glutamate 213 contacts Mg(2+).

Belongs to the cytochrome c oxidase subunit 2 family. As to quaternary structure, component of the cytochrome c oxidase (complex IV, CIV), a multisubunit enzyme composed of a catalytic core of 3 subunits and several supernumerary subunits. The complex exists as a monomer or a dimer and forms supercomplexes (SCs) in the inner mitochondrial membrane with ubiquinol-cytochrome c oxidoreductase (cytochrome b-c1 complex, complex III, CIII). Cu cation is required as a cofactor.

It localises to the mitochondrion inner membrane. It catalyses the reaction 4 Fe(II)-[cytochrome c] + O2 + 8 H(+)(in) = 4 Fe(III)-[cytochrome c] + 2 H2O + 4 H(+)(out). Component of the cytochrome c oxidase, the last enzyme in the mitochondrial electron transport chain which drives oxidative phosphorylation. The respiratory chain contains 3 multisubunit complexes succinate dehydrogenase (complex II, CII), ubiquinol-cytochrome c oxidoreductase (cytochrome b-c1 complex, complex III, CIII) and cytochrome c oxidase (complex IV, CIV), that cooperate to transfer electrons derived from NADH and succinate to molecular oxygen, creating an electrochemical gradient over the inner membrane that drives transmembrane transport and the ATP synthase. Cytochrome c oxidase is the component of the respiratory chain that catalyzes the reduction of oxygen to water. Electrons originating from reduced cytochrome c in the intermembrane space (IMS) are transferred via the dinuclear copper A center (CU(A)) of subunit 2 and heme A of subunit 1 to the active site in subunit 1, a binuclear center (BNC) formed by heme A3 and copper B (CU(B)). The BNC reduces molecular oxygen to 2 water molecules using 4 electrons from cytochrome c in the IMS and 4 protons from the mitochondrial matrix. In Mytilus edulis (Blue mussel), this protein is Cytochrome c oxidase subunit 2 (COII).